The primary structure comprises 935 residues: Phosphoenolpyruvate carboxylase (935 aa).

Active-site residues include histidine 161 and lysine 593.

The protein belongs to the PEPCase type 1 family. Mg(2+) serves as cofactor.

The catalysed reaction is oxaloacetate + phosphate = phosphoenolpyruvate + hydrogencarbonate. Functionally, forms oxaloacetate, a four-carbon dicarboxylic acid source for the tricarboxylic acid cycle. This Mycobacterium avium (strain 104) protein is Phosphoenolpyruvate carboxylase.